The following is a 171-amino-acid chain: Adenine phosphoribosyltransferase (171 aa).

It belongs to the purine/pyrimidine phosphoribosyltransferase family. In terms of assembly, homodimer.

It localises to the cytoplasm. The enzyme catalyses AMP + diphosphate = 5-phospho-alpha-D-ribose 1-diphosphate + adenine. It functions in the pathway purine metabolism; AMP biosynthesis via salvage pathway; AMP from adenine: step 1/1. Its function is as follows. Catalyzes a salvage reaction resulting in the formation of AMP, that is energically less costly than de novo synthesis. This chain is Adenine phosphoribosyltransferase, found in Geobacter metallireducens (strain ATCC 53774 / DSM 7210 / GS-15).